A 297-amino-acid chain; its full sequence is Alpha-tubulin N-acetyltransferase 1 (297 aa).

Residues 1–184 enclose the N-acetyltransferase domain; the sequence is MDFPYDLNAL…NNFVVFAGFF (184 aa). Acetyl-CoA is bound by residues 118-131 and 154-163; these read FYVT…GYGS and SPKFLSFLEK. Positions 226 to 297 are disordered; it reads FVRPGGPPHS…SLNRSRLSFH (72 aa). A compositionally biased stretch (pro residues) spans 230–240; that stretch reads GGPPHSPPLLP. Positions 241-264 are enriched in low complexity; it reads SSPQSRSLSVGSSPSRAPLRPAAA. 2 stretches are compositionally biased toward polar residues: residues 266–278 and 286–297; these read VLQQ…SPLN and TSSLNRSRLSFH.

This sequence belongs to the acetyltransferase ATAT1 family. As to quaternary structure, monomer.

The protein resides in the cytoplasm. Its subcellular location is the membrane. It localises to the clathrin-coated pit. It is found in the cell junction. The protein localises to the focal adhesion. The protein resides in the cell projection. Its subcellular location is the axon. It localises to the cytoskeleton. It is found in the spindle. It carries out the reaction L-lysyl-[alpha-tubulin] + acetyl-CoA = N(6)-acetyl-L-lysyl-[alpha-tubulin] + CoA + H(+). In terms of biological role, specifically acetylates 'Lys-40' in alpha-tubulin on the lumenal side of microtubules. Promotes microtubule destabilization and accelerates microtubule dynamics; this activity may be independent of acetylation activity. Acetylates alpha-tubulin with a slow enzymatic rate, due to a catalytic site that is not optimized for acetyl transfer. Enters the microtubule through each end and diffuses quickly throughout the lumen of microtubules. Acetylates only long/old microtubules because of its slow acetylation rate since it does not have time to act on dynamically unstable microtubules before the enzyme is released. May be involved in neuron development. Acetylates alpha-tubulin in neurons, but not in cilia. The protein is Alpha-tubulin N-acetyltransferase 1 of Danio rerio (Zebrafish).